Consider the following 535-residue polypeptide: Arylsulfatase G (535 aa).

The N-terminal stretch at 1–18 is a signal peptide; it reads MGWLFLKVLFLGVTFLGC. The Ca(2+) site is built by aspartate 44, aspartate 45, and cysteine 84. The active-site Nucleophile is cysteine 84. Cysteine 84 bears the 3-oxoalanine (Cys) mark. Asparagine 117 carries N-linked (GlcNAc...) asparagine glycosylation. A substrate-binding site is contributed by lysine 137. Histidine 139 is a catalytic residue. Residue serine 162 participates in substrate binding. An N-linked (GlcNAc...) asparagine glycan is attached at asparagine 215. Histidine 251 contacts substrate. Ca(2+)-binding residues include aspartate 302 and asparagine 303. Asparagine 356 and asparagine 497 each carry an N-linked (GlcNAc...) asparagine glycan.

Belongs to the sulfatase family. The cofactor is Ca(2+). Post-translationally, N-glycosylated with both high mannose and complex type sugars. In terms of processing, the conversion to 3-oxoalanine (also known as C-formylglycine, FGly), of a serine or cysteine residue in prokaryotes and of a cysteine residue in eukaryotes, is critical for catalytic activity. The 63-kDa precursor undergoes proteolytic processing in two steps, yielding two fragments in the first step (apparent molecular masses of 44 and 18 kDa). In the second step, the 44-kDa fragment is processed further to the 34- and 10-kDa chains. The 10-kDa chain is a cleavage product of the 44-kDa fragment but linked to the 18-kDa chain through a disulfide bridge.

The protein resides in the lysosome. It catalyses the reaction an aryl sulfate + H2O = a phenol + sulfate + H(+). The enzyme catalyses Hydrolysis of the 3-sulfate groups of the N-sulfo-D-glucosamine 3-O-sulfate units of heparin.. Functionally, displays arylsulfatase activity with pseudosubstrates at acidic pH, such as p-nitrocatechol sulfate. Catalyzes the hydrolysis of the 3-sulfate groups of the N-sulfo-D-glucosamine 3-O-sulfate units of heparin. This Canis lupus familiaris (Dog) protein is Arylsulfatase G (ARSG).